Reading from the N-terminus, the 93-residue chain is UPF0223 protein gbs1030 (93 aa).

This sequence belongs to the UPF0223 family.

This is UPF0223 protein gbs1030 from Streptococcus agalactiae serotype III (strain NEM316).